The primary structure comprises 147 residues: Deoxyuridine 5'-triphosphate nucleotidohydrolase (147 aa).

Substrate contacts are provided by residues 68-70, N81, and 85-87; these read RSG and TID.

It belongs to the dUTPase family. Mg(2+) serves as cofactor.

It carries out the reaction dUTP + H2O = dUMP + diphosphate + H(+). It functions in the pathway pyrimidine metabolism; dUMP biosynthesis; dUMP from dCTP (dUTP route): step 2/2. In terms of biological role, this enzyme is involved in nucleotide metabolism: it produces dUMP, the immediate precursor of thymidine nucleotides and it decreases the intracellular concentration of dUTP so that uracil cannot be incorporated into DNA. This chain is Deoxyuridine 5'-triphosphate nucleotidohydrolase, found in Solibacter usitatus (strain Ellin6076).